Reading from the N-terminus, the 206-residue chain is ATP-dependent Clp protease proteolytic subunit (206 aa).

Residue Ser-101 is the Nucleophile of the active site. The active site involves His-126.

It belongs to the peptidase S14 family. As to quaternary structure, component of the chloroplastic Clp protease core complex.

Its subcellular location is the plastid. The protein resides in the chloroplast stroma. The enzyme catalyses Hydrolysis of proteins to small peptides in the presence of ATP and magnesium. alpha-casein is the usual test substrate. In the absence of ATP, only oligopeptides shorter than five residues are hydrolyzed (such as succinyl-Leu-Tyr-|-NHMec, and Leu-Tyr-Leu-|-Tyr-Trp, in which cleavage of the -Tyr-|-Leu- and -Tyr-|-Trp bonds also occurs).. In terms of biological role, cleaves peptides in various proteins in a process that requires ATP hydrolysis. Has a chymotrypsin-like activity. Plays a major role in the degradation of misfolded proteins. The polypeptide is ATP-dependent Clp protease proteolytic subunit (Solanum lycopersicum (Tomato)).